A 140-amino-acid polypeptide reads, in one-letter code: Large ribosomal subunit protein uL11 (140 aa).

Belongs to the universal ribosomal protein uL11 family. In terms of assembly, part of the ribosomal stalk of the 50S ribosomal subunit. Interacts with L10 and the large rRNA to form the base of the stalk. L10 forms an elongated spine to which L12 dimers bind in a sequential fashion forming a multimeric L10(L12)X complex. One or more lysine residues are methylated.

Its function is as follows. Forms part of the ribosomal stalk which helps the ribosome interact with GTP-bound translation factors. In Staphylococcus saprophyticus subsp. saprophyticus (strain ATCC 15305 / DSM 20229 / NCIMB 8711 / NCTC 7292 / S-41), this protein is Large ribosomal subunit protein uL11.